A 489-amino-acid chain; its full sequence is tRNA(Ile)-lysidine synthase (489 aa).

Residue 35–40 (SGGLDS) participates in ATP binding.

The protein belongs to the tRNA(Ile)-lysidine synthase family.

The protein resides in the cytoplasm. The enzyme catalyses cytidine(34) in tRNA(Ile2) + L-lysine + ATP = lysidine(34) in tRNA(Ile2) + AMP + diphosphate + H(+). Ligates lysine onto the cytidine present at position 34 of the AUA codon-specific tRNA(Ile) that contains the anticodon CAU, in an ATP-dependent manner. Cytidine is converted to lysidine, thus changing the amino acid specificity of the tRNA from methionine to isoleucine. The protein is tRNA(Ile)-lysidine synthase of Burkholderia pseudomallei (strain K96243).